A 450-amino-acid polypeptide reads, in one-letter code: Zinc finger protein 277 (450 aa).

Alanine 2 carries the post-translational modification N-acetylalanine. 2 C2H2-type zinc fingers span residues 224–248 (LQCLYCEKTFRDKNTLKDHMRKKQH) and 355–381 (HQCRCYGCHVKFKSKADLRTHMEETKH).

This sequence belongs to the ZNF277 family. In terms of assembly, interacts (via zinc-finger domains) with RPS2/40S ribosomal protein S2, perhaps as nascent RPS2 is synthesized during translation; the interaction is direct; the interaction is extra-ribosomal. Interaction with RPS2 competes with the binding of RPS2 to protein arginine methyltransferase PRMT3. Interacts with Polycomb group (PcG) complex protein BMI1. May be part of a complex including at least ZNF277, BMI1 and RNF2/RING2.

The protein localises to the nucleus. In terms of biological role, probable transcription factor. Involved in modulation of cellular senescence; represses transcription of the tumor suppressor gene INK4A/ARF, perhaps acting via the Polycomb group (PcG) complex PRC1. The protein is Zinc finger protein 277 (ZNF277) of Homo sapiens (Human).